A 101-amino-acid polypeptide reads, in one-letter code: DNA-binding protein Fis (101 aa).

A DNA-binding region (H-T-H motif) is located at residues 77-96 (QTRAANMLGINRGTLRKKLK).

It belongs to the transcriptional regulatory Fis family. As to quaternary structure, homodimer.

Its function is as follows. Activates ribosomal RNA transcription. Plays a direct role in upstream activation of rRNA promoters. This chain is DNA-binding protein Fis, found in Shewanella baltica (strain OS223).